A 294-amino-acid polypeptide reads, in one-letter code: 4-hydroxy-tetrahydrodipicolinate synthase (294 aa).

Residue Thr-45 participates in pyruvate binding. Tyr-133 (proton donor/acceptor) is an active-site residue. Catalysis depends on Lys-162, which acts as the Schiff-base intermediate with substrate. Val-204 serves as a coordination point for pyruvate.

The protein belongs to the DapA family. As to quaternary structure, homotetramer; dimer of dimers.

The protein localises to the cytoplasm. The catalysed reaction is L-aspartate 4-semialdehyde + pyruvate = (2S,4S)-4-hydroxy-2,3,4,5-tetrahydrodipicolinate + H2O + H(+). It functions in the pathway amino-acid biosynthesis; L-lysine biosynthesis via DAP pathway; (S)-tetrahydrodipicolinate from L-aspartate: step 3/4. Catalyzes the condensation of (S)-aspartate-beta-semialdehyde [(S)-ASA] and pyruvate to 4-hydroxy-tetrahydrodipicolinate (HTPA). The chain is 4-hydroxy-tetrahydrodipicolinate synthase from Bartonella bacilliformis (strain ATCC 35685 / KC583 / Herrer 020/F12,63).